We begin with the raw amino-acid sequence, 541 residues long: Arginine--tRNA ligase (541 aa).

A 'HIGH' region motif is present at residues 119 to 129 (ANPTGPLHIGH).

It belongs to the class-I aminoacyl-tRNA synthetase family. In terms of assembly, monomer.

The protein resides in the cytoplasm. The catalysed reaction is tRNA(Arg) + L-arginine + ATP = L-arginyl-tRNA(Arg) + AMP + diphosphate. The sequence is that of Arginine--tRNA ligase from Helicobacter acinonychis (strain Sheeba).